The sequence spans 367 residues: Peptide chain release factor 2 (367 aa).

Glutamine 250 carries the N5-methylglutamine modification.

The protein belongs to the prokaryotic/mitochondrial release factor family. In terms of processing, methylated by PrmC. Methylation increases the termination efficiency of RF2.

Its subcellular location is the cytoplasm. Its function is as follows. Peptide chain release factor 2 directs the termination of translation in response to the peptide chain termination codons UGA and UAA. The sequence is that of Peptide chain release factor 2 from Saccharopolyspora erythraea (strain ATCC 11635 / DSM 40517 / JCM 4748 / NBRC 13426 / NCIMB 8594 / NRRL 2338).